The chain runs to 261 residues: Chanoclavine-I dehydrogenase easD (261 aa).

A signal peptide spans 1–20; it reads MPSMTSKVFAITGGASGIGA. Residue Ile-18 coordinates NADP(+). Asn-43 carries N-linked (GlcNAc...) asparagine glycosylation. NADP(+) contacts are provided by Asp-66, Arg-132, Tyr-166, Lys-170, and Thr-201. Tyr-166 acts as the Proton donor in catalysis. Lys-170 acts as the Lowers pKa of active site Tyr in catalysis.

This sequence belongs to the short-chain dehydrogenases/reductases (SDR) family. In terms of assembly, homotetramer.

The catalysed reaction is chanoclavine-I + NAD(+) = chanoclavine-I aldehyde + NADH + H(+). It functions in the pathway alkaloid biosynthesis; ergot alkaloid biosynthesis. Its function is as follows. Chanoclavine-I dehydrogenase; part of the gene cluster that mediates the biosynthesis of fungal ergot alkaloid. DmaW catalyzes the first step of ergot alkaloid biosynthesis by condensing dimethylallyl diphosphate (DMAP) and tryptophan to form 4-dimethylallyl-L-tryptophan. The second step is catalyzed by the methyltransferase easF that methylates 4-dimethylallyl-L-tryptophan in the presence of S-adenosyl-L-methionine, resulting in the formation of 4-dimethylallyl-L-abrine. The catalase easC and the FAD-dependent oxidoreductase easE then transform 4-dimethylallyl-L-abrine to chanoclavine-I which is further oxidized by easD in the presence of NAD(+), resulting in the formation of chanoclavine-I aldehyde. Agroclavine dehydrogenase easG then mediates the conversion of chanoclavine-I aldehyde to agroclavine via a non-enzymatic adduct reaction: the substrate is an iminium intermediate that is formed spontaneously from chanoclavine-I aldehyde in the presence of glutathione. The presence of easA is not required to complete this reaction. Further conversion of agroclavine to paspalic acid is a two-step process involving oxidation of agroclavine to elymoclavine and of elymoclavine to paspalic acid, the second step being performed by the elymoclavine oxidase cloA. Paspalic acid is then further converted to D-lysergic acid. Ergopeptines are assembled from D-lysergic acid and three different amino acids by the D-lysergyl-peptide-synthetases composed each of a monomudular and a trimodular nonribosomal peptide synthetase subunit. LpsB and lpsC encode the monomodular subunits responsible for D-lysergic acid activation and incorporation into the ergopeptine backbone. LpsA1 and A2 subunits encode the trimodular nonribosomal peptide synthetase assembling the tripeptide portion of ergopeptines. LpsA1 is responsible for formation of the major ergopeptine, ergotamine, and lpsA2 for alpha-ergocryptine, the minor ergopeptine of the total alkaloid mixture elaborated by C.purpurea. D-lysergyl-tripeptides are assembled by the nonribosomal peptide synthetases and released as N-(D-lysergyl-aminoacyl)-lactams. Cyclolization of the D-lysergyl-tripeptides is performed by the Fe(2+)/2-ketoglutarate-dependent dioxygenase easH which introduces a hydroxyl group into N-(D-lysergyl-aminoacyl)-lactam at alpha-C of the aminoacyl residue followed by spontaneous condensation with the terminal lactam carbonyl group. The sequence is that of Chanoclavine-I dehydrogenase easD from Claviceps purpurea (strain 20.1) (Ergot fungus).